Here is a 397-residue protein sequence, read N- to C-terminus: Lysophospholipid transporter LplT (397 aa).

The Periplasmic portion of the chain corresponds to 1 to 17; sequence MSESVHTNTSLWSKGMK. The chain crosses the membrane as a helical span at residues 18-38; that stretch reads AVIVAQFLSAFGDNALLFATL. At 39 to 52 the chain is on the cytoplasmic side; sequence ALLKAQFYPEWSQP. The chain crosses the membrane as a helical span at residues 53-73; it reads ILQMVFVGAYILFAPFVGQVA. Residues 74-90 are Periplasmic-facing; that stretch reads DSFAKGRVMMFANGLKL. The helical transmembrane segment at 91–111 threads the bilayer; sequence LGAASICFGINPFLGYTLVGV. The Cytoplasmic segment spans residues 112–144; it reads GAAAYSPAKYGILGELTTGSKLVKANGLMEAST. Residues 145-165 traverse the membrane as a helical segment; it reads IAAILLGSVAGGVLADWHVLV. Alanine 166 is a topological domain (periplasmic). A helical membrane pass occupies residues 167–187; sequence LAACALAYGGAVVANIYIPKL. At 188–226 the chain is on the cytoplasmic side; it reads AAARPGQSWNLINMTRSFLNACTSLWRNGETRFSLVGTS. Residues 227–247 traverse the membrane as a helical segment; the sequence is LFWGAGVTLRFLLVLWVPVAL. At 248–256 the chain is on the periplasmic side; sequence GITDNSTPT. Residues 257–277 form a helical membrane-spanning segment; sequence YLNAMVAIGIVVGAGAAAKLV. Residues 278–280 are Cytoplasmic-facing; it reads TLE. A helical transmembrane segment spans residues 281-301; the sequence is TVSRCMPAGILIGVVVLIFSL. Residues 302–304 lie on the Periplasmic side of the membrane; it reads QHE. Residues 305–325 traverse the membrane as a helical segment; it reads LLPAYALLMLIGVMGGFFVVP. Residues 326–343 lie on the Cytoplasmic side of the membrane; it reads LNALLQERGKKSVGAGNA. A helical transmembrane segment spans residues 344–364; it reads IAVQNLGENSAMLLMLGIYSL. At 365–366 the chain is on the periplasmic side; it reads AV. A helical transmembrane segment spans residues 367-387; that stretch reads MVGIPVVPIGIGFGALFALAI. Residues 388–397 are Cytoplasmic-facing; the sequence is TALWIWQRRH.

Belongs to the major facilitator superfamily. LplT (TC 2.A.1.42) family.

It localises to the cell inner membrane. Its function is as follows. Catalyzes the facilitated diffusion of 2-acyl-glycero-3-phosphoethanolamine (2-acyl-GPE) into the cell. This is Lysophospholipid transporter LplT from Shigella boydii serotype 4 (strain Sb227).